The primary structure comprises 190 residues: Probable nicotinate-nucleotide adenylyltransferase (190 aa).

This sequence belongs to the NadD family.

It catalyses the reaction nicotinate beta-D-ribonucleotide + ATP + H(+) = deamido-NAD(+) + diphosphate. The protein operates within cofactor biosynthesis; NAD(+) biosynthesis; deamido-NAD(+) from nicotinate D-ribonucleotide: step 1/1. Catalyzes the reversible adenylation of nicotinate mononucleotide (NaMN) to nicotinic acid adenine dinucleotide (NaAD). The protein is Probable nicotinate-nucleotide adenylyltransferase of Borrelia turicatae (strain 91E135).